The sequence spans 929 residues: Dual serine/threonine and tyrosine protein kinase (929 aa).

Residues 1 to 14 show a composition bias toward low complexity; it reads MEGDGVPWGSEPVS. The tract at residues 1 to 21 is disordered; it reads MEGDGVPWGSEPVSGPGPGGG. Coiled-coil stretches lie at residues 189-215 and 395-431; these read EEDL…MHHA and RKKE…KEEL. Residues 652-906 form the Protein kinase domain; it reads PKLGQELGRG…PLLGIVQPML (255 aa). Residues 658 to 666 and Lys681 each bind ATP; that span reads LGRGQYGVV. Catalysis depends on Asp777, which acts as the Proton acceptor.

The protein belongs to the protein kinase superfamily. Ser/Thr protein kinase family. In terms of tissue distribution, predominantly expressed in skeletal muscle and testis. Expressed in basolateral and apical membranes of all tubular epithelia. Expressed in thin ascending limb of the loop of Henle and the distal convoluted tubule. Expressed in all layers of transitional ureteric epithelium and in the ureteric smooth-muscle cells. Weakly expressed in heart, brain, placenta, kidney, pancreas, spleen, thymus, prostate, uterus, small intestine, white blood cells, stomach, spinal cord and adrenal gland. Is widely distributed in the CNS. Also detected in several tumor cell lines. Expressed in the skin.

It is found in the cytoplasm. Its subcellular location is the cell membrane. The protein resides in the apical cell membrane. It localises to the basolateral cell membrane. The protein localises to the cell junction. The catalysed reaction is L-seryl-[protein] + ATP = O-phospho-L-seryl-[protein] + ADP + H(+). The enzyme catalyses L-threonyl-[protein] + ATP = O-phospho-L-threonyl-[protein] + ADP + H(+). It carries out the reaction L-tyrosyl-[protein] + ATP = O-phospho-L-tyrosyl-[protein] + ADP + H(+). Its function is as follows. Acts as a positive regulator of ERK phosphorylation downstream of fibroblast growth factor-receptor activation. Involved in the regulation of both caspase-dependent apoptosis and caspase-independent cell death. In the skin, it plays a predominant role in suppressing caspase-dependent apoptosis in response to UV stress in a range of dermal cell types. The sequence is that of Dual serine/threonine and tyrosine protein kinase (DSTYK) from Homo sapiens (Human).